Reading from the N-terminus, the 1062-residue chain is SLIT-ROBO Rho GTPase-activating protein 1 (1062 aa).

One can recognise an F-BAR domain in the interval 19 to 314 (SQVKEIRAQL…AVDNLEPRSD (296 aa)). Residues 352-382 (QAELMLRNQQLQSRLATLKIESEEVKKTTEA) are a coiled coil. Ser-416 is modified (phosphoserine). In terms of domain architecture, Rho-GAP spans 481–671 (GRRNSHARHQ…TIIIHHETIF (191 aa)). The 60-residue stretch at 720-779 (CEPIEAIAKFDYVGRSARELSFKKGASLLLYHRASEDWWEGRHNGIDGLVPHQYIVVQDM) folds into the SH3 domain. The span at 785–799 (DTLSQKADSEASSGP) shows a compositional bias: polar residues. Residues 785–931 (DTLSQKADSE…TGFNDHKPLD (147 aa)) form a disordered region. Residues Ser-812 and Ser-894 each carry the phosphoserine modification. The segment covering 899 to 908 (SRHDSLKKID) has biased composition (basic and acidic residues). Residue Ser-909 is modified to Phosphoserine. A compositionally biased stretch (polar residues) spans 914–923 (RSTSSGQYTG). Positions 933 to 960 (ETIAQDIEETMNTALNELRELERQSTVK) form a coiled coil. Over residues 974–988 (KNSPTPATSTESLSP) the composition is skewed to polar residues. Disordered regions lie at residues 974–1013 (KNSPTPATSTESLSPLHNVALRGSEPQIRRSTSSSSETMS) and 1028–1062 (KPPALRPKPAVLPKTNPTMGPAAPSQGPTDKSCTM). A Phosphoserine modification is found at Ser-976. A Phosphothreonine modification is found at Thr-978. Low complexity predominate over residues 1004 to 1013 (STSSSSETMS). Position 1009 is a phosphoserine (Ser-1009). The span at 1053-1062 (QGPTDKSCTM) shows a compositional bias: polar residues.

In terms of assembly, homodimer. Forms a heterooligomer with SRGAP2 and SRGAP3 through its F-BAR domain. Interacts with CDC42 and RHOA. Interacts with FASLG. Interacts (via SH3 domain) with ROBO1.

Its function is as follows. GTPase-activating protein for RhoA and Cdc42 small GTPases. Together with CDC42 seems to be involved in the pathway mediating the repulsive signaling of Robo and Slit proteins in neuronal migration. SLIT2, probably through interaction with ROBO1, increases the interaction of SRGAP1 with ROBO1 and inactivates CDC42. The protein is SLIT-ROBO Rho GTPase-activating protein 1 (Srgap1) of Mus musculus (Mouse).